We begin with the raw amino-acid sequence, 126 residues long: H2B.U histone 2 (126 aa).

Residues 1-35 (MPEPSRSTPAPKKGSKKAITKAQKKDGKKRKRGRK) are disordered. N-acetylproline is present on Pro-2. Glu-3 carries the post-translational modification ADP-ribosyl glutamic acid. ADP-ribosylserine is present on Ser-7. Lys-12 carries the post-translational modification N6-(beta-hydroxybutyryl)lysine; alternate. N6-acetyllysine; alternate is present on residues Lys-12 and Lys-13. N6-crotonyllysine; alternate occurs at positions 12 and 13. The residue at position 12 (Lys-12) is an N6-lactoyllysine; alternate. At Lys-13 the chain carries N6-(2-hydroxyisobutyryl)lysine; alternate. Position 15 is a phosphoserine; by STK4/MST1 (Ser-15). 4 positions are modified to N6-acetyllysine; alternate: Lys-16, Lys-17, Lys-21, and Lys-24. N6-crotonyllysine; alternate is present on residues Lys-16, Lys-17, Lys-21, and Lys-24. An N6-lactoyllysine; alternate mark is found at Lys-16, Lys-17, Lys-21, and Lys-24. The residue at position 17 (Lys-17) is an N6-glutaryllysine; alternate. Lys-21 is modified (N6-(beta-hydroxybutyryl)lysine; alternate). 2 positions are modified to N6-(2-hydroxyisobutyryl)lysine; alternate: Lys-21 and Lys-24. Lys-21 bears the N6-butyryllysine; alternate mark. Lys-21 is covalently cross-linked (Glycyl lysine isopeptide (Lys-Gly) (interchain with G-Cter in SUMO2); alternate). Lys-25 is modified (N6-(2-hydroxyisobutyryl)lysine). Position 35 is an N6-(beta-hydroxybutyryl)lysine; alternate (Lys-35). Lys-35 is subject to N6-crotonyllysine; alternate. Position 35 is an N6-(2-hydroxyisobutyryl)lysine; alternate (Lys-35). An N6-glutaryllysine; alternate modification is found at Lys-35. At Lys-35 the chain carries N6-succinyllysine; alternate. Lys-35 is covalently cross-linked (Glycyl lysine isopeptide (Lys-Gly) (interchain with G-Cter in ubiquitin); alternate). Residue Glu-36 is modified to PolyADP-ribosyl glutamic acid. Ser-37 bears the Phosphoserine; by AMPK mark. Lys-44 bears the N6-lactoyllysine; alternate mark. 3 positions are modified to N6-(2-hydroxyisobutyryl)lysine; alternate: Lys-44, Lys-47, and Lys-58. 2 positions are modified to N6-glutaryllysine; alternate: Lys-44 and Lys-47. An N6-methyllysine; alternate modification is found at Lys-47. At Lys-58 the chain carries N6,N6-dimethyllysine; alternate. Dimethylated arginine is present on Arg-80. The residue at position 86 (Lys-86) is an N6-acetyllysine; alternate. The residue at position 86 (Lys-86) is an N6-lactoyllysine; alternate. Lys-86 carries the post-translational modification N6-(2-hydroxyisobutyryl)lysine; alternate. Lys-86 carries the post-translational modification N6,N6,N6-trimethyllysine; alternate. Arg-87 and Arg-93 each carry omega-N-methylarginine. Lys-109 is modified (N6-(beta-hydroxybutyryl)lysine; alternate). Lys-109 is modified (N6-lactoyllysine; alternate). Position 109 is an N6-(2-hydroxyisobutyryl)lysine; alternate (Lys-109). Lys-109 is modified (N6-glutaryllysine; alternate). Lys-109 is subject to N6-methyllysine; alternate. Residue Ser-113 is glycosylated (O-linked (GlcNAc) serine). Thr-116 is subject to Phosphothreonine. Lys-117 bears the N6-(beta-hydroxybutyryl)lysine; alternate mark. An N6-lactoyllysine; alternate mark is found at Lys-117 and Lys-121. Lys-117 and Lys-121 each carry N6-(2-hydroxyisobutyryl)lysine; alternate. N6-glutaryllysine; alternate is present on residues Lys-117 and Lys-121. N6-succinyllysine; alternate occurs at positions 117 and 121. Residue Lys-117 is modified to N6-methylated lysine; alternate. A Glycyl lysine isopeptide (Lys-Gly) (interchain with G-Cter in ubiquitin); alternate cross-link involves residue Lys-121.

It belongs to the histone H2B family. In terms of assembly, the nucleosome is a histone octamer containing two molecules each of H2A, H2B, H3 and H4 assembled in one H3-H4 heterotetramer and two H2A-H2B heterodimers. The octamer wraps approximately 147 bp of DNA. Monoubiquitination at Lys-35 (H2BK34Ub) by the MSL1/MSL2 dimer is required for histone H3 'Lys-4' (H3K4me) and 'Lys-79' (H3K79me) methylation and transcription activation at specific gene loci, such as HOXA9 and MEIS1 loci. Similarly, monoubiquitination at Lys-121 (H2BK120Ub) by the RNF20/40 complex gives a specific tag for epigenetic transcriptional activation and is also prerequisite for histone H3 'Lys-4' and 'Lys-79' methylation. It also functions cooperatively with the FACT dimer to stimulate elongation by RNA polymerase II. H2BK120Ub also acts as a regulator of mRNA splicing: deubiquitination by USP49 is required for efficient cotranscriptional splicing of a large set of exons. In terms of processing, phosphorylated on Ser-15 (H2BS14ph) by STK4/MST1 during apoptosis; which facilitates apoptotic chromatin condensation. Also phosphorylated on Ser-15 in response to DNA double strand breaks (DSBs), and in correlation with somatic hypermutation and immunoglobulin class-switch recombination. Phosphorylation at Ser-37 (H2BS36ph) by AMPK in response to stress promotes transcription. Post-translationally, glcNAcylation at Ser-113 promotes monoubiquitination of Lys-121. It fluctuates in response to extracellular glucose, and associates with transcribed genes. ADP-ribosylated by PARP1 or PARP2 on Ser-7 (H2BS6ADPr) in response to DNA damage. H2BS6ADPr promotes recruitment of CHD1L. Mono-ADP-ribosylated on Glu-3 (H2BE2ADPr) by PARP3 in response to single-strand breaks. Poly ADP-ribosylation on Glu-36 (H2BE35ADPr) by PARP1 regulates adipogenesis: it inhibits phosphorylation at Ser-37 (H2BS36ph), thereby blocking expression of pro-adipogenetic genes. In terms of processing, crotonylation (Kcr) is specifically present in male germ cells and marks testis-specific genes in post-meiotic cells, including X-linked genes that escape sex chromosome inactivation in haploid cells. Crotonylation marks active promoters and enhancers and confers resistance to transcriptional repressors. It is also associated with post-meiotically activated genes on autosomes. Post-translationally, hydroxybutyrylation of histones is induced by starvation. Lactylated in macrophages by EP300/P300 by using lactoyl-CoA directly derived from endogenous or exogenous lactate, leading to stimulates gene transcription.

The protein resides in the nucleus. Its subcellular location is the chromosome. Core component of nucleosome. Nucleosomes wrap and compact DNA into chromatin, limiting DNA accessibility to the cellular machineries which require DNA as a template. Histones thereby play a central role in transcription regulation, DNA repair, DNA replication and chromosomal stability. DNA accessibility is regulated via a complex set of post-translational modifications of histones, also called histone code, and nucleosome remodeling. The chain is H2B.U histone 2 from Mus musculus (Mouse).